A 292-amino-acid chain; its full sequence is Transcription factor-like protein DPA (292 aa).

A disordered region spans residues 1 to 25 (MSMEMELFVTPEKQRQHPSVSVEKT). The DNA-binding element occupies 51–135 (GGGLRQFSVM…KKEIRWKGLP (85 aa)). The DEF box signature appears at 101–135 (NEKNIRRRVYDALNVFMALDIIARDKKEIRWKGLP). Positions 163–184 (LKELREKVSSLESLMSRNQEMV) form a coiled coil. Positions 246-280 (QEQNRVSSSSSTHHQSQHSSAHSSSSSCIASGTSG) are disordered. Residues 252–280 (SSSSSTHHQSQHSSAHSSSSSCIASGTSG) show a composition bias toward low complexity.

The protein belongs to the E2F/DP family. In terms of assembly, heterodimer with E2F. Interacts preferentially with E2FA and E2FB, but also with E2FC. Strongly expressed in the actively dividing tissues of the shoot apical meristem, young leaf primordia, the vascular tissues of the maturing leaf primordia and axillary buds.

It localises to the cytoplasm. The protein localises to the nucleus. Involved in the regulation of the G1/S transition. Increases the DNA binding and the transactivation activities of E2F proteins after heterodimerization. The complex DPA/E2FA promotes cell division and acts as a regulator of the endocycle. Positively regulates the activity of S phase-specific genes. The sequence is that of Transcription factor-like protein DPA (DPA) from Arabidopsis thaliana (Mouse-ear cress).